The primary structure comprises 151 residues: Small ribosomal subunit protein uS13 (151 aa).

It belongs to the universal ribosomal protein uS13 family. In terms of assembly, part of the 30S ribosomal subunit. Forms a loose heterodimer with protein S19. Forms two bridges to the 50S subunit in the 70S ribosome.

Its function is as follows. Located at the top of the head of the 30S subunit, it contacts several helices of the 16S rRNA. In the 70S ribosome it contacts the 23S rRNA (bridge B1a) and protein L5 of the 50S subunit (bridge B1b), connecting the 2 subunits; these bridges are implicated in subunit movement. This is Small ribosomal subunit protein uS13 from Hyperthermus butylicus (strain DSM 5456 / JCM 9403 / PLM1-5).